Consider the following 145-residue polypeptide: D-aminoacyl-tRNA deacylase (145 aa).

The Gly-cisPro motif, important for rejection of L-amino acids motif lies at 137–138 (GP).

This sequence belongs to the DTD family. As to quaternary structure, homodimer.

The protein resides in the cytoplasm. The enzyme catalyses glycyl-tRNA(Ala) + H2O = tRNA(Ala) + glycine + H(+). It catalyses the reaction a D-aminoacyl-tRNA + H2O = a tRNA + a D-alpha-amino acid + H(+). In terms of biological role, an aminoacyl-tRNA editing enzyme that deacylates mischarged D-aminoacyl-tRNAs. Also deacylates mischarged glycyl-tRNA(Ala), protecting cells against glycine mischarging by AlaRS. Acts via tRNA-based rather than protein-based catalysis; rejects L-amino acids rather than detecting D-amino acids in the active site. By recycling D-aminoacyl-tRNA to D-amino acids and free tRNA molecules, this enzyme counteracts the toxicity associated with the formation of D-aminoacyl-tRNA entities in vivo and helps enforce protein L-homochirality. This is D-aminoacyl-tRNA deacylase from Pseudomonas fluorescens (strain ATCC BAA-477 / NRRL B-23932 / Pf-5).